Reading from the N-terminus, the 370-residue chain is Flagellar P-ring protein (370 aa).

The first 27 residues, 1-27 (MPARPIPVPLLALALAAALAVPSPAAA), serve as a signal peptide directing secretion.

It belongs to the FlgI family. The basal body constitutes a major portion of the flagellar organelle and consists of four rings (L,P,S, and M) mounted on a central rod.

The protein resides in the periplasm. It is found in the bacterial flagellum basal body. Assembles around the rod to form the L-ring and probably protects the motor/basal body from shearing forces during rotation. In Anaeromyxobacter sp. (strain K), this protein is Flagellar P-ring protein.